Here is a 1119-residue protein sequence, read N- to C-terminus: MMTSVSSDHCRGAREKPQISAAQSTQPQKQVVQATAEQMRLAQVIFDKNDSDFEAKVKQLMEVTGKNQDECIVALHDCNGDVNKAINILLEGNSDTTSWETVGCKKKNFAKENSENKENREKKSEKESSRGRGNNNRKGRGGNRGREFRGEENGIDCNQVDKPSDRGKRARGRGFGRGRGRGAGRFSTQGMGTFNPADYSDSTSTDVCGTKLVVWEAAQNGADEGTELASNTHNIAQDLSNKSSYGLKGAWKNSVEEWTTEDWTEDLSETKVFTASSAPAENHILPGQSIDLVALLQKPVPHSQASEANSFETSQQQGFGQALVFTNSQHNNQMAPGTGSSTAVNSCSPQSLSSVLGSGFGELAPPKMANITSSQILDQLKAPSLGQFTTTPSTQQNSTSHPTTTTSWDLKPPTSQSSVLSHLDFKSQPEPSPVLSQLSQRQQHQSQAVTVPPPGLESFPSQAKLRESTPGDSPSTVNKLLQLPSTTIENISVSVHQPQPKHIKLAKRRIPPASKIPASAVEMPGSADVTGLNVQFGALEFGSEPSLSEFGSAPSSENSNQIPISLYSKSLSEPLNTSLSMTSAVQNSTYTTSVITSCSLTSSSLNSASPVAMSSSYDQSSVHNRIPYQSPVSSSESAPGTIMNGHGGGRSQQTLDTPKTTGPPSALPSVSSLPSTTSCTALLPSTSQHTGDLTSSPLSQLSSSLSSHQSSLSAHAALSSSTSHTHASVESASSHQSSATFSTAATSVSSSASSGASLSSSMNTANSLCLGGTPASASSSSSRAAPLVTSGKAPPNLPQGVPPLLHNQYLVGPGGLLPAYPIYGYDELQMLQSRLPVDYYGIPFAAPTALASRDGSLANNPYPGDVTKFGRGDSASPAPATTPAQPQQSQSQTHHTAQQPFVNPALPPGYSYTGLPYYTGMPSAFQYGPTMFVPPASAKQHGVNLSTPTPPFQQASGYGQHGYSTGYDDLTQGTAAGDYSKGGYAGSSQAPNKSAGSGPGKGVSVSSSTTGLPDMTGSVYNKTQTFDKQGFHAGTPPPFSLPSVLGSTGPLASGAAPGYAPPPFLHILPAHQQPHSQLLHHHLPQDAQSGSGQRSQPSSLQPKSQASKPAYGNSPYWTN.

A disordered region spans residues 1–26 (MMTSVSSDHCRGAREKPQISAAQSTQ). Over residues 8 to 17 (DHCRGAREKP) the composition is skewed to basic and acidic residues. The region spanning 48-92 (KNDSDFEAKVKQLMEVTGKNQDECIVALHDCNGDVNKAINILLEG) is the UBA domain. Positions 105–130 (KKKNFAKENSENKENREKKSEKESSR) form a coiled coil. A compositionally biased stretch (basic and acidic residues) spans 110–130 (AKENSENKENREKKSEKESSR). 7 disordered regions span residues 110–202 (AKEN…YSDS), 385–476 (LGQF…SPST), 622–736 (VHNR…SSHQ), 853–905 (RDGS…VNPA), 937–966 (SAKQHGVNLSTPTPPFQQASGYGQHGYSTG), 982–1020 (GGYAGSSQAPNKSAGSGPGKGVSVSSSTTGLPDMTGSVY), and 1082–1119 (HLPQDAQSGSGQRSQPSSLQPKSQASKPAYGNSPYWTN). The residue at position 166 (Arg166) is an Omega-N-methylarginine. Positions 168–182 (KRARGRGFGRGRGRG) are enriched in basic residues. Over residues 389–407 (TTTPSTQQNSTSHPTTTTS) the composition is skewed to low complexity. A phosphoserine mark is found at Ser432, Ser439, Ser473, and Ser630. Residues 435-447 (LSQLSQRQQHQSQ) are compositionally biased toward low complexity. Residues 651 to 662 (SQQTLDTPKTTG) are compositionally biased toward polar residues. The span at 663-678 (PPSALPSVSSLPSTTS) shows a compositional bias: low complexity. Residues 679–694 (CTALLPSTSQHTGDLT) show a composition bias toward polar residues. 2 stretches are compositionally biased toward low complexity: residues 695–736 (SSPL…SSHQ) and 874–900 (SASPAPATTPAQPQQSQSQTHHTAQQP). Positions 943–957 (VNLSTPTPPFQQASG) are enriched in polar residues. 2 stretches are compositionally biased toward low complexity: residues 1002–1011 (GVSVSSSTTG) and 1088–1102 (QSGSGQRSQPSSLQP).

As to quaternary structure, may interact with ANXA2.

It localises to the nucleus. The protein localises to the chromosome. The protein resides in the cytoplasm. Recruits the ubiquitination machinery to RNA polymerase II for polyubiquitination, removal and degradation, when the transcription-coupled nucleotide excision repair (TC-NER) machinery fails to resolve DNA damage. May promote the degradation of ANXA2. The chain is Ubiquitin-associated protein 2 from Homo sapiens (Human).